Here is a 65-residue protein sequence, read N- to C-terminus: Large ribosomal subunit protein uL30 (65 aa).

It belongs to the universal ribosomal protein uL30 family. In terms of assembly, part of the 50S ribosomal subunit.

The protein is Large ribosomal subunit protein uL30 of Mycobacterium bovis (strain ATCC BAA-935 / AF2122/97).